A 974-amino-acid polypeptide reads, in one-letter code: Receptor-like protein 7 (974 aa).

Residues 1–24 (MSFLIRSICFLILIPSFLITFVSA) form the signal peptide. The Extracellular segment spans residues 25 to 930 (TQHLCHSDQK…EEEEEESFSW (906 aa)). 2 N-linked (GlcNAc...) asparagine glycosylation sites follow: Asn54 and Asn90. 6 LRR repeats span residues 96-120 (LRHL…EFDK), 122-145 (TGLE…LLQL), 147-166 (KLVS…SFHY), 181-204 (LRNL…EFSN), 206-229 (RSLR…ILLI), and 230-252 (PNLQ…VFHE). N-linked (GlcNAc...) asparagine glycosylation occurs at Asn253. LRR repeat units follow at residues 254–277 (NSLL…ISSL), 278–301 (KNLT…LGNL), 302–325 (SHLS…IGNL), 327–349 (QLTN…LSNL), and 350–373 (TKLN…ISQL). Asn279 and Asn300 each carry an N-linked (GlcNAc...) asparagine glycan. Asn348 carries N-linked (GlcNAc...) asparagine glycosylation. The LRR 12; degenerate repeat unit spans residues 374 to 396 (SKLKFFFADDNPFIGAILSPLLK). LRR repeat units lie at residues 397–422 (IPSL…IFML), 425–448 (LETF…VFSS), 454–472 (TLYI…SDFP), 473–495 (SNLE…IRKG), 496–519 (RNLQ…LWRM), 521–542 (TLNS…VKAS), 544–570 (ESQL…SLRY), 572–589 (SGSN…ICGL), 590–616 (SSLE…LMSS), 618–638 (SDLD…FMNA), 639–662 (TKLR…LTGC), 664–685 (SLEV…ELNS), 687–712 (QKLQ…VWFG), 713–737 (FPQL…YFMN), 785–809 (LTIY…IGLL), 810–833 (KELR…LANL), 834–857 (KNLE…LGTL), and 859–882 (SLAW…QFQR). 3 N-linked (GlcNAc...) asparagine glycosylation sites follow: Asn434, Asn466, and Asn484. An N-linked (GlcNAc...) asparagine glycan is attached at Asn529. Asn577, Asn603, Asn624, and Asn637 each carry an N-linked (GlcNAc...) asparagine glycan. The N-linked (GlcNAc...) asparagine glycan is linked to Asn737. Residues Asn816, Asn845, and Asn864 are each glycosylated (N-linked (GlcNAc...) asparagine). Residues 899-923 (LENVCGHIKESTPTQTEPLETKEEE) form a disordered region. Residues 931–951 (IAAGLGFAPGVVFGLAMGYIV) form a helical membrane-spanning segment. Residues 952–974 (VSYKHQWFMKTFGRSKQQNTRTR) are Cytoplasmic-facing.

It belongs to the RLP family.

It is found in the cell membrane. In Arabidopsis thaliana (Mouse-ear cress), this protein is Receptor-like protein 7.